A 422-amino-acid chain; its full sequence is Carboxypeptidase B2 (422 aa).

The first 21 residues, 1 to 21 (MKLHGLGILVAIILYEQHGFA), serve as a signal peptide directing secretion. The propeptide at 22–113 (FQSGQVLSAL…QTFNDTVSPR (92 aa)) is activation peptide. Asn43, Asn72, Asn84, and Asn107 each carry an N-linked (GlcNAc...) asparagine glycan. Residues 121 to 418 (QYHSLNEIYS…AAISKIVWHV (298 aa)) enclose the Peptidase M14 domain. Cys177 and Cys190 are oxidised to a cystine. 2 residues coordinate Zn(2+): His180 and Glu183. Substrate-binding positions include 180-183 (HARE) and Arg238. Asn240 carries N-linked (GlcNAc...) asparagine glycosylation. Cystine bridges form between Cys249-Cys273 and Cys264-Cys278. 255–256 (NR) is a substrate binding site. His309 contributes to the Zn(2+) binding site. 310–311 (SY) provides a ligand contact to substrate. An N-linked (GlcNAc...) asparagine glycan is attached at Asn322. Tyr362 provides a ligand contact to substrate. Glu384 serves as the catalytic Proton donor/acceptor.

The protein belongs to the peptidase M14 family. Zn(2+) serves as cofactor. As to expression, plasma; synthesized in the liver.

The protein localises to the secreted. It carries out the reaction Release of C-terminal Arg and Lys from a polypeptide.. With respect to regulation, TAFI/CPB2 is unique among carboxypeptidases in that it spontaneously inactivates with a short half-life, a property that is crucial for its role in controlling blood clot lysis. The zymogen is stabilized by interactions with the activation peptide. Release of the activation peptide increases a dynamic flap mobility and in time this leads to conformational changes that disrupt the catalytic site and expose a cryptic thrombin-cleavage site present at Arg-323. Functionally, cleaves C-terminal arginine or lysine residues from biologically active peptides such as kinins or anaphylatoxins in the circulation thereby regulating their activities. Down-regulates fibrinolysis by removing C-terminal lysine residues from fibrin that has already been partially degraded by plasmin. The chain is Carboxypeptidase B2 (Cpb2) from Mus musculus (Mouse).